The chain runs to 115 residues: U3-lycotoxin-Ls1v (115 aa).

A signal peptide spans 1–20 (MKFVLLFGVLLVTLFSHSSA). Residues 21 to 44 (EMLDDFDQADEDELLSLIEKEEAR) constitute a propeptide that is removed on maturation. 4 disulfides stabilise this stretch: Cys48-Cys63, Cys55-Cys72, Cys62-Cys87, and Cys74-Cys85.

The protein belongs to the neurotoxin 19 (CSTX) family. 01 subfamily. In terms of tissue distribution, expressed by the venom gland.

It localises to the secreted. In Lycosa singoriensis (Wolf spider), this protein is U3-lycotoxin-Ls1v.